Consider the following 511-residue polypeptide: Lysine--tRNA ligase (511 aa).

The segment at 1-21 is disordered; it reads MHTEKDPNKNTPEQQTPISLN. Over residues 9–21 the composition is skewed to polar residues; that stretch reads KNTPEQQTPISLN. Positions 422 and 429 each coordinate Mg(2+).

Belongs to the class-II aminoacyl-tRNA synthetase family. As to quaternary structure, homodimer. It depends on Mg(2+) as a cofactor.

The protein localises to the cytoplasm. The enzyme catalyses tRNA(Lys) + L-lysine + ATP = L-lysyl-tRNA(Lys) + AMP + diphosphate. This is Lysine--tRNA ligase from Pelodictyon phaeoclathratiforme (strain DSM 5477 / BU-1).